The chain runs to 143 residues: Transcriptional regulator MraZ (143 aa).

SpoVT-AbrB domains follow at residues 5–47 (EYKH…PMHE) and 76–119 (ATEC…SSKR).

This sequence belongs to the MraZ family. Forms oligomers.

It localises to the cytoplasm. The protein localises to the nucleoid. In Halothermothrix orenii (strain H 168 / OCM 544 / DSM 9562), this protein is Transcriptional regulator MraZ.